A 512-amino-acid chain; its full sequence is Alpha-1B-glycoprotein (512 aa).

A signal peptide spans 1–18 (MSLLATVLLLWGFTLGPG). 5 consecutive Ig-like V-type domains span residues 22-126 (MLDS…VTGK), 127-219 (EPLP…MYAS), 220-312 (QAPP…PVEL), 313-415 (MWSD…LRVN), and 416-512 (GPPP…IVEG). N-linked (GlcNAc...) asparagine glycosylation is found at N44, N89, and N192. 5 disulfide bridges follow: C49/C96, C153/C195, C245/C292, C343/C392, and C441/C488. Residues N369, N381, N389, and N485 are each glycosylated (N-linked (GlcNAc...) asparagine).

In terms of assembly, interacts with CRISP3. In terms of tissue distribution, expressed in the liver hepatocytes of male and female GH transgenic mice and in the liver of female, but not of male, non-transgenic mice.

It localises to the secreted. In Mus musculus (Mouse), this protein is Alpha-1B-glycoprotein (A1bg).